The following is a 94-amino-acid chain: Pyrimidine/purine nucleoside phosphorylase (94 aa).

The protein belongs to the nucleoside phosphorylase PpnP family.

The enzyme catalyses a purine D-ribonucleoside + phosphate = a purine nucleobase + alpha-D-ribose 1-phosphate. The catalysed reaction is adenosine + phosphate = alpha-D-ribose 1-phosphate + adenine. It catalyses the reaction cytidine + phosphate = cytosine + alpha-D-ribose 1-phosphate. It carries out the reaction guanosine + phosphate = alpha-D-ribose 1-phosphate + guanine. The enzyme catalyses inosine + phosphate = alpha-D-ribose 1-phosphate + hypoxanthine. The catalysed reaction is thymidine + phosphate = 2-deoxy-alpha-D-ribose 1-phosphate + thymine. It catalyses the reaction uridine + phosphate = alpha-D-ribose 1-phosphate + uracil. It carries out the reaction xanthosine + phosphate = alpha-D-ribose 1-phosphate + xanthine. Functionally, catalyzes the phosphorolysis of diverse nucleosides, yielding D-ribose 1-phosphate and the respective free bases. Can use uridine, adenosine, guanosine, cytidine, thymidine, inosine and xanthosine as substrates. Also catalyzes the reverse reactions. The sequence is that of Pyrimidine/purine nucleoside phosphorylase from Saccharophagus degradans (strain 2-40 / ATCC 43961 / DSM 17024).